A 307-amino-acid chain; its full sequence is Dof zinc finger protein DOF5.4 (307 aa).

A Dof-type zinc finger spans residues 51-105; the sequence is LKCPRCNSLNTKFCYYNNYNLSQPRHFCKNCRRYWTKGGVLRNVPVGGGCRKAKR. Zn(2+) is bound by residues cysteine 53, cysteine 56, cysteine 78, and cysteine 81. Residues 96–147 are disordered; it reads VGGGCRKAKRSKTKQVPSSSSADKPTTTQDDHHVEEKSSTGSHSSSESSSLT. The segment covering 109-123 has biased composition (polar residues); sequence KQVPSSSSADKPTTT. Residues 124–133 show a composition bias toward basic and acidic residues; that stretch reads QDDHHVEEKS. Positions 134 to 147 are enriched in low complexity; sequence STGSHSSSESSSLT.

The protein resides in the nucleus. Its function is as follows. Transcription factor that binds specifically to a 5'-AA[AG]G-3' consensus core sequence. Enhances the DNA binding of OBF transcription factors to OCS elements. This chain is Dof zinc finger protein DOF5.4 (DOF5.4), found in Arabidopsis thaliana (Mouse-ear cress).